A 166-amino-acid polypeptide reads, in one-letter code: 3-isopropylmalate dehydratase small subunit (166 aa).

It belongs to the LeuD family. LeuD type 2 subfamily. In terms of assembly, heterodimer of LeuC and LeuD.

The enzyme catalyses (2R,3S)-3-isopropylmalate = (2S)-2-isopropylmalate. It functions in the pathway amino-acid biosynthesis; L-leucine biosynthesis; L-leucine from 3-methyl-2-oxobutanoate: step 2/4. Functionally, catalyzes the isomerization between 2-isopropylmalate and 3-isopropylmalate, via the formation of 2-isopropylmaleate. In Moorella thermoacetica (strain ATCC 39073 / JCM 9320), this protein is 3-isopropylmalate dehydratase small subunit.